A 270-amino-acid polypeptide reads, in one-letter code: Sulfur carrier protein FdhD (270 aa).

The Cysteine persulfide intermediate role is filled by Cys108. 247–252 (FIRDGR) contributes to the Mo-bis(molybdopterin guanine dinucleotide) binding site.

Belongs to the FdhD family.

Its subcellular location is the cytoplasm. Functionally, required for formate dehydrogenase (FDH) activity. Acts as a sulfur carrier protein that transfers sulfur from IscS to the molybdenum cofactor prior to its insertion into FDH. This is Sulfur carrier protein FdhD from Halalkalibacterium halodurans (strain ATCC BAA-125 / DSM 18197 / FERM 7344 / JCM 9153 / C-125) (Bacillus halodurans).